Consider the following 2568-residue polypeptide: Highly reducing polyketide synthase AN6791 (2568 aa).

The 435-residue stretch at 11–445 (AEPIAIVGLS…GTNAHLIVES (435 aa)) folds into the Ketosynthase family 3 (KS3) domain. Catalysis depends on for beta-ketoacyl synthase activity residues Cys-200, His-326, and His-366. The 325-residue stretch at 558–882 (VFTGQGAQWY…GSLVREVSAV (325 aa)) folds into the Malonyl-CoA:ACP transacylase (MAT) domain. The N-terminal hotdog fold stretch occupies residues 949–1087 (HDLLGSLVLG…GLITMEPEDA (139 aa)). The 310-residue stretch at 949-1258 (HDLLGSLVLG…FQSVGRSAAP (310 aa)) folds into the PKS/mFAS DH domain. Residue His-981 is the Proton acceptor; for dehydratase activity of the active site. The segment at 1104–1258 (TRRFGPSDLY…FQSVGRSAAP (155 aa)) is C-terminal hotdog fold. Asp-1169 (proton donor; for dehydratase activity) is an active-site residue. A methyltransferase (CMet) domain region spans residues 1311–1620 (RACLYFIYDA…EVRDCESDEW (310 aa)). In terms of domain architecture, Enoyl reductase (ER) spans 1857–2174 (GLLDTIAFDD…VGKHSGKVVL (318 aa)). One can recognise a Ketoreductase (KR) domain in the interval 2197–2375 (ASYLLVGGAG…AVSMDLGPVK (179 aa)). The Carrier domain maps to 2481 to 2558 (QAEKLVVEAI…ALASEVTRKS (78 aa)). The residue at position 2518 (Ser-2518) is an O-(pantetheine 4'-phosphoryl)serine.

Requires pantetheine 4'-phosphate as cofactor.

It participates in secondary metabolite biosynthesis. Functionally, highly reducing polyketide synthase; part of a cluster that mediates the biosynthesis of a yet undetermined secondary metabolite. With esterase AN6793, produces a pathway intermediate compound with molecular weight 258. In Emericella nidulans (strain FGSC A4 / ATCC 38163 / CBS 112.46 / NRRL 194 / M139) (Aspergillus nidulans), this protein is Highly reducing polyketide synthase AN6791.